Here is a 119-residue protein sequence, read N- to C-terminus: Toxin ICK-8 (119 aa).

A signal peptide spans Met1 to Ala19. 4 disulfide bridges follow: Cys59–Cys74, Cys67–Cys80, Cys71–Cys116, and Cys73–Cys87.

This sequence belongs to the neurotoxin 25 family. ICK-8 subfamily. As to expression, expressed by the venom gland.

It is found in the secreted. Its function is as follows. Ion channel inhibitor. The sequence is that of Toxin ICK-8 from Trittame loki (Brush-footed trapdoor spider).